We begin with the raw amino-acid sequence, 181 residues long: Inner membrane-spanning protein YciB (181 aa).

5 helical membrane passes run 24 to 44, 49 to 69, 81 to 101, 119 to 139, and 149 to 169; these read SATA…WLRH, NMLW…LILQ, LYWL…KNLI, LNIS…YVAY, and FKLF…ALLL.

It belongs to the YciB family.

The protein localises to the cell inner membrane. Functionally, plays a role in cell envelope biogenesis, maintenance of cell envelope integrity and membrane homeostasis. This Nitrosomonas eutropha (strain DSM 101675 / C91 / Nm57) protein is Inner membrane-spanning protein YciB.